Here is a 311-residue protein sequence, read N- to C-terminus: 4-hydroxy-tetrahydrodipicolinate synthase (311 aa).

Position 51 (Thr-51) interacts with pyruvate. Tyr-140 (proton donor/acceptor) is an active-site residue. Lys-168 serves as the catalytic Schiff-base intermediate with substrate. A pyruvate-binding site is contributed by Ile-209.

Belongs to the DapA family. As to quaternary structure, homotetramer; dimer of dimers.

It localises to the cytoplasm. It catalyses the reaction L-aspartate 4-semialdehyde + pyruvate = (2S,4S)-4-hydroxy-2,3,4,5-tetrahydrodipicolinate + H2O + H(+). The protein operates within amino-acid biosynthesis; L-lysine biosynthesis via DAP pathway; (S)-tetrahydrodipicolinate from L-aspartate: step 3/4. Its function is as follows. Catalyzes the condensation of (S)-aspartate-beta-semialdehyde [(S)-ASA] and pyruvate to 4-hydroxy-tetrahydrodipicolinate (HTPA). The chain is 4-hydroxy-tetrahydrodipicolinate synthase from Streptococcus pneumoniae (strain Hungary19A-6).